Reading from the N-terminus, the 127-residue chain is Arginine decarboxylase proenzyme (127 aa).

The Schiff-base intermediate with substrate; via pyruvic acid role is filled by Ser-72. Ser-72 bears the Pyruvic acid (Ser); by autocatalysis mark. Catalysis depends on His-77, which acts as the Proton acceptor; for processing activity. Cys-92 serves as the catalytic Proton donor; for catalytic activity.

This sequence belongs to the prokaryotic AdoMetDC family. Type 1 subfamily. In terms of assembly, heterooctamer of four alpha and four beta chains arranged as a tetramer of alpha/beta heterodimers. Requires pyruvate as cofactor. Is synthesized initially as an inactive proenzyme. Formation of the active enzyme involves a self-maturation process in which the active site pyruvoyl group is generated from an internal serine residue via an autocatalytic post-translational modification. Two non-identical subunits are generated from the proenzyme in this reaction, and the pyruvate is formed at the N-terminus of the alpha chain, which is derived from the carboxyl end of the proenzyme. The post-translation cleavage follows an unusual pathway, termed non-hydrolytic serinolysis, in which the side chain hydroxyl group of the serine supplies its oxygen atom to form the C-terminus of the beta chain, while the remainder of the serine residue undergoes an oxidative deamination to produce ammonia and the pyruvoyl group blocking the N-terminus of the alpha chain.

It carries out the reaction L-arginine + H(+) = agmatine + CO2. It functions in the pathway amine and polyamine biosynthesis; agmatine biosynthesis; agmatine from L-arginine: step 1/1. In terms of biological role, specifically catalyzes the decarboxylation of L-arginine to agmatine. Has no S-adenosylmethionine decarboxylase (AdoMetDC) activity. The protein is Arginine decarboxylase proenzyme of Staphylothermus marinus (strain ATCC 43588 / DSM 3639 / JCM 9404 / F1).